The following is a 1403-amino-acid chain: Baculoviral IAP repeat-containing protein 1a (1403 aa).

3 BIR repeats span residues 63–128 (RLKT…EFLQ), 162–228 (RLES…EFLQ), and 281–346 (RMDT…VFLQ). C315, C318, H335, and C342 together coordinate Zn(2+). The 295-residue stretch at 464–758 (SVMCVEGETG…EFLAAMRLTE (295 aa)) folds into the NACHT domain. K476 is a binding site for ATP.

Interacts (via NACHT domain) with APAF1 (via CARD and NACHT domains).

In terms of biological role, anti-apoptotic protein which acts by inhibiting the activities of CASP3, CASP7 and CASP9. Can inhibit the autocleavage of pro-CASP9 and cleavage of pro-CASP3 by CASP9. Capable of inhibiting CASP9 autoproteolysis at 'Asp-315' and decreasing the rate of auto proteolysis at 'Asp-330'. Acts as a mediator of neuronal survival in pathological conditions. Prevents motor-neuron apoptosis induced by a variety of signals. This Mus musculus (Mouse) protein is Baculoviral IAP repeat-containing protein 1a (Naip1).